Reading from the N-terminus, the 428-residue chain is AP-1 complex subunit mu-2 (428 aa).

Positions 170–426 (KNEVFLDVIE…ITMAGEYELR (257 aa)) constitute an MHD domain.

The protein belongs to the adaptor complexes medium subunit family. As to quaternary structure, adaptor protein complex 1 (AP-1) is a heterotetramer composed of two large adaptins (gamma-type subunit and beta-type subunit), a medium adaptin (mu-type subunit) and a small adaptin (sigma-type subunit). As to expression, ubiquitous.

Its subcellular location is the golgi apparatus. It localises to the trans-Golgi network membrane. The protein localises to the early endosome membrane. It is found in the cytoplasmic vesicle. The protein resides in the clathrin-coated vesicle membrane. Functionally, subunit of clathrin-associated adaptor protein complex 1 that plays a role in protein sorting at the trans-Golgi network and early endosomes (TGN/EE). The AP complexes mediate the recruitment of clathrin to membranes and the recognition of sorting signals within the cytosolic tails of transmembrane cargo molecules. Required for KNOLLE localization at the cell plate to mediate cytokinesis. Functions redundantly with AP1M1 in multiple post-Golgi trafficking pathways leading from the TGN to the vacuole, the plasma membrane, and the cell-division plane. This chain is AP-1 complex subunit mu-2 (AP1M2), found in Arabidopsis thaliana (Mouse-ear cress).